A 292-amino-acid chain; its full sequence is uncharacterized protein (292 aa).

Residues 1–58 (MEWEQLEYFQTLARMQHVTKAAKSLSITQPALSRSIARLENHLGVPLFDRQGRSISLN) form the HTH lysR-type domain. A DNA-binding region (H-T-H motif) is located at residues 18 to 37 (VTKAAKSLSITQPALSRSIA).

The protein belongs to the LysR transcriptional regulatory family.

This is an uncharacterized protein from Bacillus subtilis (strain 168).